A 540-amino-acid polypeptide reads, in one-letter code: Telomerase Cajal body protein 1 (540 aa).

The segment covering 1–10 has biased composition (pro residues); that stretch reads MKTPEAPPLA. The disordered stretch occupies residues 1–126; that stretch reads MKTPEAPPLA…GEDVEGVSEE (126 aa). Residues S26, S30, S54, S64, S85, and S90 each carry the phosphoserine modification. Acidic residues predominate over residues 116–126; it reads PGEDVEGVSEE. 6 WD repeats span residues 158-197, 213-258, 263-304, 314-355, 356-396, and 402-441; these read QPEN…YNEG, EGDT…LRAS, NHLD…RDCE, GQSG…ALLG, GHQG…HPLW, and VTTN…LESK. T480 is subject to Phosphothreonine. S482 bears the Phosphoserine mark. Residues 520 to 540 form a disordered region; the sequence is SDAHQEEMGQGRTEGGGGEFT. Residues 531 to 540 are compositionally biased toward gly residues; sequence RTEGGGGEFT.

This sequence belongs to the TCAB1 family. As to quaternary structure, component of the telomerase holoenzyme complex composed of one molecule of TERT, one molecule of WRAP53/TCAB1, two molecules of H/ACA ribonucleoprotein complex subunits DKC1, NOP10, NHP2 and GAR1, and a telomerase RNA template component (TERC). The telomerase holoenzyme complex is associated with TEP1, SMG6/EST1A and POT1. Interacts with the chaperonin-containing T-complex (TRiC) complex; which mediates the folding of WRAP53/TCAB1. Interacts with COIL. Interacts with SMN1. Interacts with RNF8. Interacts with histone H2AX. Phosphorylated at Ser-64 by ATM in response to DNA damage, promoting its interaction with histone H2AX and localization to sites of DNA double-strand breaks.

It localises to the nucleus. Its subcellular location is the cajal body. The protein localises to the chromosome. It is found in the telomere. Functionally, RNA chaperone that plays a key role in telomere maintenance and RNA localization to Cajal bodies. Specifically recognizes and binds the Cajal body box (CAB box) present in both small Cajal body RNAs (scaRNAs) and telomerase RNA template component (TERC). Essential component of the telomerase holoenzyme complex, a ribonucleoprotein complex essential for the replication of chromosome termini that elongates telomeres in most eukaryotes. In the telomerase holoenzyme complex, required to stimulate the catalytic activity of the complex. Acts by specifically binding the CAB box of the TERC RNA and controlling the folding of the CR4/CR5 region of the TERC RNA, a critical step for telomerase activity. In addition, also controls telomerase holoenzyme complex localization to Cajal body. During S phase, required for delivery of TERC to telomeres during S phase and for telomerase activity. In addition to its role in telomere maintenance, also required for Cajal body formation, probably by mediating localization of scaRNAs to Cajal bodies. Also plays a role in DNA repair: phosphorylated by ATM in response to DNA damage and relocalizes to sites of DNA double-strand breaks to promote the repair of DNA double-strand breaks. Acts by recruiting the ubiquitin ligase RNF8 to DNA breaks and promote both homologous recombination (HR) and non-homologous end joining (NHEJ). In Bos taurus (Bovine), this protein is Telomerase Cajal body protein 1.